The sequence spans 246 residues: Putative S-adenosyl-L-methionine-dependent methyltransferase Mflv_0168 (246 aa).

S-adenosyl-L-methionine is bound by residues Asp-112 and 141 to 142 (DL).

Belongs to the UPF0677 family.

Exhibits S-adenosyl-L-methionine-dependent methyltransferase activity. This is Putative S-adenosyl-L-methionine-dependent methyltransferase Mflv_0168 from Mycolicibacterium gilvum (strain PYR-GCK) (Mycobacterium gilvum (strain PYR-GCK)).